The sequence spans 188 residues: Elongation factor P (188 aa).

Lys-34 carries the N6-(3,6-diaminohexanoyl)-5-hydroxylysine modification.

The protein belongs to the elongation factor P family. In terms of processing, may be beta-lysylated on the epsilon-amino group of Lys-34 by the combined action of EpmA and EpmB, and then hydroxylated on the C5 position of the same residue by EpmC (if this protein is present). Lysylation is critical for the stimulatory effect of EF-P on peptide-bond formation. The lysylation moiety may extend toward the peptidyltransferase center and stabilize the terminal 3-CCA end of the tRNA. Hydroxylation of the C5 position on Lys-34 may allow additional potential stabilizing hydrogen-bond interactions with the P-tRNA.

The protein localises to the cytoplasm. It functions in the pathway protein biosynthesis; polypeptide chain elongation. Functionally, involved in peptide bond synthesis. Alleviates ribosome stalling that occurs when 3 or more consecutive Pro residues or the sequence PPG is present in a protein, possibly by augmenting the peptidyl transferase activity of the ribosome. Modification of Lys-34 is required for alleviation. The polypeptide is Elongation factor P (Serratia proteamaculans (strain 568)).